The chain runs to 281 residues: Complement C1q tumor necrosis factor-related protein 1 (281 aa).

The first 25 residues, 1 to 25 (MGSCAQGFMLGCCLLLAITWGPILS), serve as a signal peptide directing secretion. A disordered region spans residues 35–68 (QEWEETEELPSPLDPVTRPEETREKYSPRQGEDL). The span at 51–66 (TRPEETREKYSPRQGE) shows a compositional bias: basic and acidic residues. A glycan (N-linked (GlcNAc...) asparagine) is linked at N93. A Collagen-like domain is found at 99 to 140 (GEKGDRGDRGLQGKYGKIGSTGPRGHVGPKGQKGSIGAPGNH). The disordered stretch occupies residues 107-136 (RGLQGKYGKIGSTGPRGHVGPKGQKGSIGA). The region spanning 141 to 281 (CKSQYAAFSV…GYLVKPASEP (141 aa)) is the C1q domain.

Its subcellular location is the secreted. The protein is Complement C1q tumor necrosis factor-related protein 1 (C1qtnf1) of Mus musculus (Mouse).